A 174-amino-acid polypeptide reads, in one-letter code: Male-enhanced antigen 1 (174 aa).

2 disordered regions span residues Met1–Asp77 and Leu94–Asp123. Composition is skewed to acidic residues over residues Ser38–Glu48, Pro65–Asp77, and Leu101–Gly110. Ser103 carries the phosphoserine modification.

In terms of biological role, may play an important role in spermatogenesis and/or testis development. This chain is Male-enhanced antigen 1 (MEA1), found in Sus scrofa (Pig).